Here is a 335-residue protein sequence, read N- to C-terminus: Olfactory receptor 9K2 (335 aa).

Residues 1 to 50 (MLGSKPRVHLYILPCASQQVSTMGDRGTSNHSEMTDFILAGFRVRPELHI) lie on the Extracellular side of the membrane. N30 is a glycosylation site (N-linked (GlcNAc...) asparagine). A helical transmembrane segment spans residues 51-71 (LLFLLFLFVYAMILLGNVGMM). At 72–79 (TIIMTDPR) the chain is on the cytoplasmic side. Residues 80-100 (LNTPMYFFLGNLSFIDLFYSS) traverse the membrane as a helical segment. Residues 101-124 (VIEPKAMINFWSENKSISFAGCVA) lie on the Extracellular side of the membrane. N-linked (GlcNAc...) asparagine glycosylation is present at N114. C122 and C214 are oxidised to a cystine. Residues 125–145 (QLFLFALLIVTEGFLLAAMAY) form a helical membrane-spanning segment. Residues 146–164 (DRFIAICNPLLYSVQMSTR) are Cytoplasmic-facing. The chain crosses the membrane as a helical span at residues 165-185 (LCTQLVAGSYFCGCISSVIQT). The Extracellular segment spans residues 186-222 (SMTFTLSFCASRAVDHFYCDSRPLQRLSCSDLFIHRM). A helical transmembrane segment spans residues 223–242 (ISFSLSCIIILPTIIVIIVS). The Cytoplasmic segment spans residues 243-262 (YMYIVSTVLKIHSTEGHKKA). Residues 263–283 (FSTCSSHLGVVSVLYGAVFFM) form a helical membrane-spanning segment. At 284-296 (YLTPDRFPELSKV) the chain is on the extracellular side. Residues 316 to 335 (RNKDVQEALKKFLEKKNIIL) lie on the Cytoplasmic side of the membrane.

It belongs to the G-protein coupled receptor 1 family.

Its subcellular location is the cell membrane. In terms of biological role, odorant receptor. The protein is Olfactory receptor 9K2 (OR9K2) of Homo sapiens (Human).